The chain runs to 159 residues: Membrane protein FAM174B (159 aa).

The first 27 residues, 1-27 (MRAALPPARLLPLLLLLALLGAPAARA), serve as a signal peptide directing secretion. The tract at residues 28–73 (SRAQSAAPPQPGAERQPRPPPGPGPGNATGTGSGEAAGGGGSSNSS) is disordered. Residues 28 to 90 (SRAQSAAPPQ…ISSLLRDLHT (63 aa)) are Extracellular-facing. The segment covering 52 to 69 (PGNATGTGSGEAAGGGGS) has biased composition (gly residues). Asn54 is a glycosylation site (N-linked (GlcNAc...) asparagine). The helical transmembrane segment at 91–111 (LKAAVIVACAFTAFLIACLLL) threads the bilayer. The Cytoplasmic segment spans residues 112–159 (RVFRSGKRLKKTRKYDIITTPAERVEMAPLNEEDDEDEDSTVFDIKYR).

This sequence belongs to the FAM174 family.

It localises to the cell membrane. The protein localises to the golgi apparatus. Its function is as follows. Essential for Golgi structural integrity. This is Membrane protein FAM174B (FAM174B) from Bos taurus (Bovine).